We begin with the raw amino-acid sequence, 467 residues long: Acetaldehyde dehydrogenase (acetylating) EutE (467 aa).

The targets protein to the BMC stretch occupies residues 1-19 (MNQQDIEQVVKAVLLKMKD).

This sequence belongs to the EutE/PduP family. Interacts with EutS, which targets it to the interior of the BMC.

It is found in the bacterial microcompartment. The enzyme catalyses acetaldehyde + NAD(+) + CoA = acetyl-CoA + NADH + H(+). Its pathway is amine and polyamine degradation; ethanolamine degradation. In terms of biological role, acts as the second step in ethanolamine degradation by converting acetaldehyde into acetyl-CoA. Has a very strong preference for NAD(+) over NADP(+) in both catalytic directions. May play a role in bacterial microcompartment (BMC) assembly or maintenance. Directly targeted to the BMC. Functionally, expression of the eut operon allows this bacteria to use ethanolamine (EA) as a carbon, nitrogen and energy source. It relies on cobalamin (vitamin B12) both as a cofactor for the ethanolamine ammonia-lyase (EAL) activity and to induce the operon. EA enhances bacterial survival in macrophages in a concentration-dependent manner, suggesting it is an important nutrient during infection. This chain is Acetaldehyde dehydrogenase (acetylating) EutE, found in Salmonella typhimurium (strain LT2 / SGSC1412 / ATCC 700720).